The following is a 105-amino-acid chain: Large ribosomal subunit protein bL21 (105 aa).

The protein belongs to the bacterial ribosomal protein bL21 family. As to quaternary structure, part of the 50S ribosomal subunit. Contacts protein L20.

Its function is as follows. This protein binds to 23S rRNA in the presence of protein L20. This is Large ribosomal subunit protein bL21 from Frankia casuarinae (strain DSM 45818 / CECT 9043 / HFP020203 / CcI3).